The sequence spans 207 residues: dTTP/UTP pyrophosphatase (207 aa).

Asp-87 serves as the catalytic Proton acceptor.

It belongs to the Maf family. YhdE subfamily. A divalent metal cation is required as a cofactor.

The protein resides in the cytoplasm. It catalyses the reaction dTTP + H2O = dTMP + diphosphate + H(+). It carries out the reaction UTP + H2O = UMP + diphosphate + H(+). Nucleoside triphosphate pyrophosphatase that hydrolyzes dTTP and UTP. May have a dual role in cell division arrest and in preventing the incorporation of modified nucleotides into cellular nucleic acids. The protein is dTTP/UTP pyrophosphatase of Nitrosomonas europaea (strain ATCC 19718 / CIP 103999 / KCTC 2705 / NBRC 14298).